Reading from the N-terminus, the 150-residue chain is Nascent polypeptide-associated complex subunit beta (150 aa).

Disordered stretches follow at residues 1-45 (MADV…LQQS) and 123-150 (YQNMQQKKDDDDEIPDLVAGESFENKVE). A compositionally biased stretch (basic residues) spans 23 to 32 (TPRRKVKRAP). The NAC-A/B domain occupies 36–101 (GADDKKLQQS…GEDKELTELV (66 aa)).

The protein belongs to the NAC-beta family. Part of the nascent polypeptide-associated complex (NAC), consisting of EGD2 and EGD1. NAC associates with ribosomes via EGD1.

It is found in the cytoplasm. The protein localises to the nucleus. Functionally, component of the nascent polypeptide-associated complex (NAC), a dynamic component of the ribosomal exit tunnel, protecting the emerging polypeptides from interaction with other cytoplasmic proteins to ensure appropriate nascent protein targeting. The NAC complex also promotes mitochondrial protein import by enhancing productive ribosome interactions with the outer mitochondrial membrane and blocks the inappropriate interaction of ribosomes translating non-secretory nascent polypeptides with translocation sites in the membrane of the endoplasmic reticulum. EGD1 may act as a transcription factor that exert a negative effect on the expression of several genes that are transcribed by RNA polymerase II. The polypeptide is Nascent polypeptide-associated complex subunit beta (EGD1) (Chaetomium globosum (strain ATCC 6205 / CBS 148.51 / DSM 1962 / NBRC 6347 / NRRL 1970) (Soil fungus)).